The following is a 248-amino-acid chain: Urease accessory protein UreG 1 (248 aa).

Over residues 1–14 (MLPEHHDHGHEHGG) the composition is skewed to basic and acidic residues. The interval 1-36 (MLPEHHDHGHEHGGNGHGHGHRHQVNFDPTAAEPDP) is disordered. A GTP-binding site is contributed by 53-60 (GPVGSGKT).

The protein belongs to the SIMIBI class G3E GTPase family. UreG subfamily. In terms of assembly, homodimer. UreD, UreF and UreG form a complex that acts as a GTP-hydrolysis-dependent molecular chaperone, activating the urease apoprotein by helping to assemble the nickel containing metallocenter of UreC. The UreE protein probably delivers the nickel.

It is found in the cytoplasm. Facilitates the functional incorporation of the urease nickel metallocenter. This process requires GTP hydrolysis, probably effectuated by UreG. The protein is Urease accessory protein UreG 1 of Saccharopolyspora erythraea (strain ATCC 11635 / DSM 40517 / JCM 4748 / NBRC 13426 / NCIMB 8594 / NRRL 2338).